Here is a 296-residue protein sequence, read N- to C-terminus: NAD kinase (296 aa).

Residue D73 is the Proton acceptor of the active site. Residues 73–74, K78, 151–152, R178, D180, and 191–196 each bind NAD(+); these read DG, NE, and TAHAMS.

Belongs to the NAD kinase family. It depends on a divalent metal cation as a cofactor.

The protein resides in the cytoplasm. It catalyses the reaction NAD(+) + ATP = ADP + NADP(+) + H(+). In terms of biological role, involved in the regulation of the intracellular balance of NAD and NADP, and is a key enzyme in the biosynthesis of NADP. Catalyzes specifically the phosphorylation on 2'-hydroxyl of the adenosine moiety of NAD to yield NADP. This Francisella tularensis subsp. tularensis (strain WY96-3418) protein is NAD kinase.